The chain runs to 128 residues: Ribonuclease P protein component (128 aa).

Belongs to the RnpA family. In terms of assembly, consists of a catalytic RNA component (M1 or rnpB) and a protein subunit.

It carries out the reaction Endonucleolytic cleavage of RNA, removing 5'-extranucleotides from tRNA precursor.. RNaseP catalyzes the removal of the 5'-leader sequence from pre-tRNA to produce the mature 5'-terminus. It can also cleave other RNA substrates such as 4.5S RNA. The protein component plays an auxiliary but essential role in vivo by binding to the 5'-leader sequence and broadening the substrate specificity of the ribozyme. This Prochlorococcus marinus (strain NATL1A) protein is Ribonuclease P protein component.